The primary structure comprises 617 residues: Probable LRR receptor-like serine/threonine-protein kinase RKF3 (617 aa).

An N-terminal signal peptide occupies residues 1 to 20; that stretch reads MLFLRRIAVVFFVFTSFSAA. At 21 to 212 the chain is on the extracellular side; the sequence is QNSTCPLDFS…PTSSGANKVK (192 aa). N-linked (GlcNAc...) asparagine glycans are attached at residues Asn22, Asn124, Asn135, and Asn165. The chain crosses the membrane as a helical span at residues 213-233; sequence VLVSSFSVLLVASVLVITAWF. Topologically, residues 234–617 are cytoplasmic; sequence WYCRRKKSKL…DGPSGNTNTT (384 aa). The Protein kinase domain maps to 283-563; sequence FSRHNIIGRG…VKMLESNEFT (281 aa). ATP-binding positions include 289–297 and Lys311; that span reads IGRGGYGNV. Asp412 acts as the Proton acceptor in catalysis. The tract at residues 585–617 is disordered; that stretch reads VSSSSGSGKLTSPTGYQAFSFGGDGPSGNTNTT.

Belongs to the protein kinase superfamily. Ser/Thr protein kinase family. As to expression, expressed in the whole plant at low levels.

The protein resides in the cell membrane. It carries out the reaction L-seryl-[protein] + ATP = O-phospho-L-seryl-[protein] + ADP + H(+). It catalyses the reaction L-threonyl-[protein] + ATP = O-phospho-L-threonyl-[protein] + ADP + H(+). This chain is Probable LRR receptor-like serine/threonine-protein kinase RKF3 (RKF3), found in Arabidopsis thaliana (Mouse-ear cress).